Consider the following 260-residue polypeptide: Nuclear receptor subfamily 0 group B member 2 (260 aa).

In terms of domain architecture, NR LBD spans 16–260 (SHPTILYTLL…ELLEDMLLLR (245 aa)). At Arg57 the chain carries Symmetric dimethylarginine; by PRMT5.

The protein belongs to the nuclear hormone receptor family. NR0 subfamily. Heterodimer; efficient DNA binding requires dimerization with another bHLH protein. Interacts (via N-terminus) with NEUROD1 (via N-terminus and C-terminus). Interacts with ID2. Interacts with NR1I3 and EID1. Interacts with RARA, RXRA, THRB, NR5A1, NR5A2, PPARA and PPARG. Interacts with RORG, NFIL3, NR1D1 and BHLHE41. Interacts with HNF4A; the resulting heterodimer is transcriptionally inactive. Interacts with DDX3X; this interaction disrupts the interaction between HNF4 and NR0B2/SHP that forms inactive heterodimers and enhances the formation of active HNF4 homodimers. Post-translationally, arginine methylation by PRMT5 enhances repression activity of metabolic genes in liver in response to bile acid signaling, by increasing interaction with cofactors. As to expression, detected in kidney, testis, heart and liver.

It is found in the cytoplasm. Its subcellular location is the nucleus. Its function is as follows. Transcriptional regulator that acts as a negative regulator of receptor-dependent signaling pathways. Specifically inhibits transactivation of the nuclear receptor with which it interacts. Inhibits transcriptional activity of NEUROD1 on E-box-containing promoter by interfering with the coactivation function of the p300/CBP-mediated transcription complex for NEUROD1. Essential component of the liver circadian clock which via its interaction with NR1D1 and RORG regulates NPAS2-mediated hepatic lipid metabolism. Regulates the circadian expression of cytochrome P450 (CYP) enzymes. Represses: NR5A2 and HNF4A to down-regulate CYP2C38, NFLI3 to up-regulate CYP2A5, BHLHE41/HNF1A axis to up-regulate CYP1A2, CYP2E1 and CYP3A11, and NR1D1 to up-regulate CYP2B10, CYP4A10 and CYP4A14. The sequence is that of Nuclear receptor subfamily 0 group B member 2 (Nr0b2) from Rattus norvegicus (Rat).